The primary structure comprises 807 residues: Mechanosensitive cation channel TMEM63A (807 aa).

At 1–51 (MTDSPFLELWQSRAVSVREQLGLGDRPNDSYCYNSAKNSTVLQGVTFGGIP) the chain is on the extracellular side. N38 is a glycosylation site (N-linked (GlcNAc...) asparagine). A helical transmembrane segment spans residues 52-74 (TVLLIDVSCFLFLILVFSIIRRR). The Cytoplasmic portion of the chain corresponds to 75–134 (FWDYGRIALVSEADSEPRFQRLSSTSSSGQQDFENELGCCPWLTAIFRLHDDQILEWCGE). A helical membrane pass occupies residues 135-167 (DAIHYLSFQRHIIFLLVVVSFLSLCVILPVNLS). The Extracellular segment spans residues 168 to 191 (GDLLDKDPYSFGRTTIANLQTDND). A helical membrane pass occupies residues 192 to 217 (LLWLHTIFAVIYLFLTVGFMRHHTQS). Residues 218–416 (IKYKEENLVR…CWKNLSIQGL (199 aa)) lie on the Cytoplasmic side of the membrane. Residues 219-414 (KYKEENLVRR…DICWKNLSIQ (196 aa)) form an intracellular linker IL2; confers mechanosensitivity region. The chain crosses the membrane as a helical span at residues 417 to 444 (RWWLQWLGINFTLFLGLFFLTTPSIILS). The Extracellular segment spans residues 445–462 (TMDKFNVTKPIHALNNPI). The N-linked (GlcNAc...) asparagine glycan is linked to N450. Residues 463–490 (ISQFFPTLLLWSFSALLPSIVYYSTLLE) traverse the membrane as a helical segment. Topologically, residues 491–495 (SHWTK) are cytoplasmic. A helical membrane pass occupies residues 496 to 532 (SGENQIMMTKVYIFLIFMVLILPSLGLTSLDFFFRWL). The Extracellular portion of the chain corresponds to 533 to 554 (FDKTSSEASIRLECVFLPDQGA). Residues 555–586 (FFVNYVIASAFIGNGMELLRLPGLILYTFRMI) traverse the membrane as a helical segment. A gating helix region spans residues 555-586 (FFVNYVIASAFIGNGMELLRLPGLILYTFRMI). The Cytoplasmic segment spans residues 587 to 606 (MAKTAADRRNVKQNQAFQYE). A helical transmembrane segment spans residues 607–624 (FGAMYAWMLCVFTVIMAY). Residues 625 to 628 (SITC) lie on the Extracellular side of the membrane. The chain crosses the membrane as a helical span at residues 629-651 (PIIAPFGLIYILLKHMVDRHNLY). The Cytoplasmic segment spans residues 652 to 661 (FIYLPAKLEK). Residues 662–689 (GIHFAAVNQALAAPILCLFWLYFFSFLR) form a helical membrane-spanning segment. The Extracellular portion of the chain corresponds to 690–694 (LGMKA). The chain crosses the membrane as a helical span at residues 695–709 (PATLFTFLVVLLTIL). Residues 710-807 (VCLAHTCFGY…GSVAAAPQEA (98 aa)) lie on the Cytoplasmic side of the membrane. Residue S739 is modified to Phosphoserine.

It belongs to the CSC1 (TC 1.A.17) family. As to quaternary structure, monomer. In terms of processing, N-Glycosylated.

It localises to the lysosome membrane. The protein resides in the early endosome membrane. Its subcellular location is the cell membrane. It catalyses the reaction Ca(2+)(in) = Ca(2+)(out). In terms of biological role, mechanosensitive cation channel with low conductance and high activation threshold. In contrast to TMEM63B, does not show phospholipid scramblase activity. Acts as a regulator of lysosomal morphology by mediating lysosomal mechanosensitivity. Important for the baby's first breath and respiration throughout life. Upon lung inflation conducts cation currents in alveolar type 1 and 2 cells triggering lamellar body exocytosis and surfactant secretion into airspace. Also acts as an osmosensitive cation channel preferentially activated by hypotonic stress. The sequence is that of Mechanosensitive cation channel TMEM63A (TMEM63A) from Pongo abelii (Sumatran orangutan).